The following is an 876-amino-acid chain: Protein TORMOZ EMBRYO DEFECTIVE (876 aa).

WD repeat units lie at residues 58–97 (GESDTLTALALSPDDKLLFSAGHSRQIRVWDLETLKCIRS), 100–139 (GHEGPVMGMACHASGGLLATAGADRKVLVWDVDGGFCTHY), 142–183 (GHKG…TEKK), 190–229 (KHFSAVTSIALSEDGLTLFSAGRDKVVNLWDLHDYSCKAT), 255–294 (LDQKKSKKKESDSQATYFITVGERGVVRIWKSEGSICLYE), 308–347 (ESKRGFTAAAMLPSDHGLLCVTADQQFFFYSVVENVEETE), 356–396 (GYNE…CSYV), 399–441 (GHKE…CIGV), 444–484 (GHNG…EDSE), 497–536 (AHDKDINSVAVARNDSLVCTGSEDRTASIWRLPDLVHVVT), 539–580 (GHKR…KTFE), 581–620 (GHTSSVLRASFITDGTQFVSCGADGLLKLWNVNTSECIAT), and 623–662 (QHEDKVWALAVGKKTEMIATGGGDAVINLWHDSTASDKED). Positions 816-876 (VETEYPKDEK…AEAQGSVIAV (61 aa)) are disordered. Residues 819 to 831 (EYPKDEKKKEKDV) are compositionally biased toward basic and acidic residues. A Nuclear localization signal motif is present at residues 848–855 (SRKRKSQK). The span at 849–864 (RKRKSQKSKGKSNKKR) shows a compositional bias: basic residues.

Preferentially expressed in dividing cells in a variety of tissues and meristematic regions.

It localises to the nucleus. The protein localises to the nucleolus. Its function is as follows. Essential protein involved in the regulation of cell division planes during embryogenesis which defines cell patterning, especially longitudinal division planes of the proembryo, probably via the regulation of embryo patterning genes expression patterns. The sequence is that of Protein TORMOZ EMBRYO DEFECTIVE from Arabidopsis thaliana (Mouse-ear cress).